We begin with the raw amino-acid sequence, 284 residues long: 2-dehydro-3-deoxyphosphooctonate aldolase (284 aa).

It belongs to the KdsA family.

The protein resides in the cytoplasm. It carries out the reaction D-arabinose 5-phosphate + phosphoenolpyruvate + H2O = 3-deoxy-alpha-D-manno-2-octulosonate-8-phosphate + phosphate. Its pathway is carbohydrate biosynthesis; 3-deoxy-D-manno-octulosonate biosynthesis; 3-deoxy-D-manno-octulosonate from D-ribulose 5-phosphate: step 2/3. The protein operates within bacterial outer membrane biogenesis; lipopolysaccharide biosynthesis. This Burkholderia mallei (strain NCTC 10247) protein is 2-dehydro-3-deoxyphosphooctonate aldolase.